Here is a 428-residue protein sequence, read N- to C-terminus: MENLMASSNLIKQLQERGLVAQVTDEEALAERLAQGPIALYCGFDPTADSLHLGHLVPLLCLKRFQQAGHKPVALVGGATGLIGDPSFKAAERKLNTEDTVQEWVDKIRKQVAPFLDFDCGDNSAIAANNYDWFGSMNVLTFLRDIGKHFSVNQMINKEAVKQRLNRDDQGISFTEFSYNLLQGYDFACLNKLHGVALQIGGSDQWGNITSGIDLTRRLHQNQVFGLTVPLITKADGTKFGKTEGGAVWLDPKKTSPYKFYQFWINTADADVYRFLKFFTFMDIAEINALEEEDKNSGKAPRAQYVLAEQVTRLVHGEEGLEAAKRITESLFNGNLSDLSEADFEQLAQDGVPMIEMEKGADLLQALVDSELQPSRGQARKTVASNAVTINGEKQADPEYVFSDSDRLFGRYTLLRRGKKNYCLVCWK.

Residue Y41 coordinates L-tyrosine. The 'HIGH' region motif lies at 46–55 (PTADSLHLGH). Residues Y179 and Q183 each coordinate L-tyrosine. The 'KMSKS' region motif lies at 239–243 (KFGKT). Residue K242 coordinates ATP. Residues 361–418 (ADLLQALVDSELQPSRGQARKTVASNAVTINGEKQADPEYVFSDSDRLFGRYTLLRRG) form the S4 RNA-binding domain.

Belongs to the class-I aminoacyl-tRNA synthetase family. TyrS type 1 subfamily. Homodimer.

The protein resides in the cytoplasm. The catalysed reaction is tRNA(Tyr) + L-tyrosine + ATP = L-tyrosyl-tRNA(Tyr) + AMP + diphosphate + H(+). In terms of biological role, catalyzes the attachment of tyrosine to tRNA(Tyr) in a two-step reaction: tyrosine is first activated by ATP to form Tyr-AMP and then transferred to the acceptor end of tRNA(Tyr). In Klebsiella pneumoniae subsp. pneumoniae (strain ATCC 700721 / MGH 78578), this protein is Tyrosine--tRNA ligase.